Here is a 492-residue protein sequence, read N- to C-terminus: MTLWINGDWITGQGERRRKTNPVSAEILWQGNDANAAQVAEACQAAREAFPRWARQPFAARQAIVEKFAALLEAHKADLTEVIARETGKPRWEAATEVTAMINKIAISIKAYHARTGEQKSELVDGAATLRHRPHGVLAVFGPYNFPGHLPNGHIVPALLAGNTLIFKPSELTPWTGETVIKLWERAGLPAGVLNLVQGGREIGQALSSLDDLDGLLFTGSASTGYQLHRQLSGQPEKILALEMGGNNPLIIEDATNMDAAVHLTLQSAFITAGQRCTCARRLLVKQGAQGDAFLARLVDVAGRLQPGRWDDDPQPFIGGLISAQAAQHVMEAWRQREALGGRTLLAPRKVKEGTSLLTPGIIELTGVADVPDEEVFGPLLNVWRYAHFDEAIRLANNTRFGLSCGLVSTDRAQFEQLLLEARAGIVNWNKPLTGAASTAPFGGVGASGNHRPSAWYAADYCAWPMASLESPELTLPATLSPGLDFSRREAV.

220–225 (GSASTG) contacts NAD(+). Active-site residues include E243 and C277.

It belongs to the aldehyde dehydrogenase family. AstD subfamily.

It catalyses the reaction N-succinyl-L-glutamate 5-semialdehyde + NAD(+) + H2O = N-succinyl-L-glutamate + NADH + 2 H(+). The protein operates within amino-acid degradation; L-arginine degradation via AST pathway; L-glutamate and succinate from L-arginine: step 4/5. Its function is as follows. Catalyzes the NAD-dependent reduction of succinylglutamate semialdehyde into succinylglutamate. The protein is N-succinylglutamate 5-semialdehyde dehydrogenase of Salmonella agona (strain SL483).